The following is a 326-amino-acid chain: DNA-binding death effector domain-containing protein 2 (326 aa).

The 80-residue stretch at 25 to 104 folds into the DED domain; that stretch reads SLHRMFEVVG…RHDLLPHLAR (80 aa). Positions 104-109 match the Nuclear localization signal motif; it reads RKRRRP. Positions 104-194 are disordered; it reads RKRRRPVSPE…PARPSSEGKV (91 aa). Positions 136 to 146 are enriched in low complexity; it reads SSSSANSQQGQ. The Bipartite nuclear localization signal motif lies at 155-173; that stretch reads KRQRRSRGRPSGGARRRRR. Residues 155–174 are compositionally biased toward basic residues; sequence KRQRRSRGRPSGGARRRRRG. Low complexity predominate over residues 175–191; that stretch reads APAAPQQQSEPARPSSE.

As to quaternary structure, interacts with CASP8, CASP10 and GTF3C3. Homodimerizes and heterodimerizes with DEDD. As to expression, expressed in most tissues. High levels were found in liver, kidney, heart, ovary, spleen, testes, skeletal muscle and peripheral blood leukocytes. Expression was absent or low in colon and small intestine. Expression is relatively high in the tumor cell lines chronic myologenous leukemia K-562 and the colorectal adenocarcinoma SW480. Expression is moderate in the cervical carcinoma HeLa, the Burkitt's lymphoma Raji, the lung carcinoma A-549, and the melanoma G-361. In contrast, two leukemia cell lines, HL-60 (promyelocytic leukemia) and MOLT-4 (lymphoblastic leukemia), show relatively low levels.

The protein localises to the nucleus. It is found in the nucleolus. In terms of biological role, may play a critical role in death receptor-induced apoptosis and may target CASP8 and CASP10 to the nucleus. May regulate degradation of intermediate filaments during apoptosis. May play a role in the general transcription machinery in the nucleus and might be an important regulator of the activity of GTF3C3. This is DNA-binding death effector domain-containing protein 2 (DEDD2) from Homo sapiens (Human).